The chain runs to 466 residues: A-type ATP synthase subunit B (466 aa).

This sequence belongs to the ATPase alpha/beta chains family. Has multiple subunits with at least A(3), B(3), C, D, E, F, H, I and proteolipid K(x).

It is found in the cell membrane. Component of the A-type ATP synthase that produces ATP from ADP in the presence of a proton gradient across the membrane. The B chain is a regulatory subunit. This chain is A-type ATP synthase subunit B, found in Sulfolobus acidocaldarius (strain ATCC 33909 / DSM 639 / JCM 8929 / NBRC 15157 / NCIMB 11770).